A 203-amino-acid chain; its full sequence is MTAPRRFAGDTLVIASHNRGKVREIADLLAAHVRHFPSAAELDLPEPEETEATFIGNAALKARAAALASGLPALADDSGLWVDALDGAPGIYSARWAGPEKDFGAAMERVRRELEAAADRRGDRARFVCALALAWPDGHVEAVEGTAHGTLTFPPRGGKGFGYDPVFIPDGHACTYAELDPAHKHAISHRADAFRQLLARCFA.

Substrate is bound at residue 16–21; that stretch reads SHNRGK. Mg(2+) is bound by residues Glu-48 and Asp-77. Catalysis depends on Asp-77, which acts as the Proton acceptor. Residues Ser-78, 161–164, Lys-184, and 189–190 each bind substrate; these read FGYD and HR.

Belongs to the HAM1 NTPase family. In terms of assembly, homodimer. Mg(2+) is required as a cofactor.

The enzyme catalyses XTP + H2O = XMP + diphosphate + H(+). It catalyses the reaction dITP + H2O = dIMP + diphosphate + H(+). The catalysed reaction is ITP + H2O = IMP + diphosphate + H(+). Its function is as follows. Pyrophosphatase that catalyzes the hydrolysis of nucleoside triphosphates to their monophosphate derivatives, with a high preference for the non-canonical purine nucleotides XTP (xanthosine triphosphate), dITP (deoxyinosine triphosphate) and ITP. Seems to function as a house-cleaning enzyme that removes non-canonical purine nucleotides from the nucleotide pool, thus preventing their incorporation into DNA/RNA and avoiding chromosomal lesions. The protein is dITP/XTP pyrophosphatase of Rhodospirillum centenum (strain ATCC 51521 / SW).